Reading from the N-terminus, the 597-residue chain is Elongation factor 4 (597 aa).

The 183-residue stretch at 2–184 (KHIRNFSIIA…TIVKSIPAPE (183 aa)) folds into the tr-type G domain. GTP-binding positions include 14–19 (DHGKST) and 131–134 (NKID).

The protein belongs to the TRAFAC class translation factor GTPase superfamily. Classic translation factor GTPase family. LepA subfamily.

The protein resides in the cell inner membrane. The enzyme catalyses GTP + H2O = GDP + phosphate + H(+). Its function is as follows. Required for accurate and efficient protein synthesis under certain stress conditions. May act as a fidelity factor of the translation reaction, by catalyzing a one-codon backward translocation of tRNAs on improperly translocated ribosomes. Back-translocation proceeds from a post-translocation (POST) complex to a pre-translocation (PRE) complex, thus giving elongation factor G a second chance to translocate the tRNAs correctly. Binds to ribosomes in a GTP-dependent manner. This is Elongation factor 4 from Aliivibrio fischeri (strain MJ11) (Vibrio fischeri).